The primary structure comprises 62 residues: Beta-defensin 110 (62 aa).

A signal peptide spans 1 to 21; it reads MKIHLFFFILLFWVTILPARS. Disulfide bonds link Cys32–Cys60, Cys39–Cys53, and Cys43–Cys61.

The protein belongs to the beta-defensin family.

It localises to the secreted. Its function is as follows. Has antibacterial activity. The sequence is that of Beta-defensin 110 (DEFB110) from Canis lupus familiaris (Dog).